Reading from the N-terminus, the 446-residue chain is Histidine--tRNA ligase (446 aa).

The protein belongs to the class-II aminoacyl-tRNA synthetase family. As to quaternary structure, homodimer.

Its subcellular location is the cytoplasm. The catalysed reaction is tRNA(His) + L-histidine + ATP = L-histidyl-tRNA(His) + AMP + diphosphate + H(+). In Burkholderia ambifaria (strain MC40-6), this protein is Histidine--tRNA ligase.